The following is a 142-amino-acid chain: Transcription antitermination protein NusB (142 aa).

Belongs to the NusB family.

Involved in transcription antitermination. Required for transcription of ribosomal RNA (rRNA) genes. Binds specifically to the boxA antiterminator sequence of the ribosomal RNA (rrn) operons. In Roseiflexus sp. (strain RS-1), this protein is Transcription antitermination protein NusB.